Reading from the N-terminus, the 714-residue chain is Fatty acid oxidation complex subunit alpha (714 aa).

The segment at 1–190 (MEMASAFTLN…KLGLVDDVVP (190 aa)) is enoyl-CoA hydratase. A 3-hydroxyacyl-CoA dehydrogenase region spans residues 306-714 (APLNSVGILG…FWKTTATDLQ (409 aa)).

In the N-terminal section; belongs to the enoyl-CoA hydratase/isomerase family. The protein in the central section; belongs to the 3-hydroxyacyl-CoA dehydrogenase family. As to quaternary structure, heterotetramer of two alpha chains (FadJ) and two beta chains (FadI).

The protein resides in the cytoplasm. The catalysed reaction is a (3S)-3-hydroxyacyl-CoA = a (2E)-enoyl-CoA + H2O. It carries out the reaction a 4-saturated-(3S)-3-hydroxyacyl-CoA = a (3E)-enoyl-CoA + H2O. It catalyses the reaction a (3S)-3-hydroxyacyl-CoA + NAD(+) = a 3-oxoacyl-CoA + NADH + H(+). The enzyme catalyses (3S)-3-hydroxybutanoyl-CoA = (3R)-3-hydroxybutanoyl-CoA. It functions in the pathway lipid metabolism; fatty acid beta-oxidation. Its function is as follows. Catalyzes the formation of a hydroxyacyl-CoA by addition of water on enoyl-CoA. Also exhibits 3-hydroxyacyl-CoA epimerase and 3-hydroxyacyl-CoA dehydrogenase activities. The protein is Fatty acid oxidation complex subunit alpha of Escherichia coli O6:K15:H31 (strain 536 / UPEC).